Consider the following 190-residue polypeptide: Cytoglobin (190 aa).

Residues 1–21 (MEKVPGDMEIERRERSEELSE) form a disordered region. In terms of domain architecture, Globin spans 18-167 (ELSEAERKAV…IYSHVTAAYK (150 aa)). An intrachain disulfide couples Cys38 to Cys83. Heme b contacts are provided by His81 and His113.

Belongs to the globin family. In terms of assembly, monomeric. Homodimer; disulfide-linked in vitro. Also homooligomeric in vitro. Post-translationally, the formation of an intramolecular disulfide bond between cysteines Cys-38 and Cys-83 specifically enhances the nitrite reductase activity. As to expression, expressed in brain and retina by non-neuronal cells (at protein level). This is the major globin expressed in vascular smooth muscle and is not present in the endothelium (at protein level).

Its subcellular location is the cytoplasm. The protein localises to the nucleus. The catalysed reaction is Fe(II)-heme b-[protein] + nitric oxide + O2 = Fe(III)-heme b-[protein] + nitrate. It carries out the reaction 2 superoxide + 2 H(+) = H2O2 + O2. It catalyses the reaction Fe(III)-heme b-[protein] + nitric oxide + H2O = Fe(II)-heme b-[protein] + nitrite + 2 H(+). The enzyme catalyses H2O2 + AH2 = A + 2 H2O. With respect to regulation, the nitric oxide dioxygenase activity is activated by a reducing system composed of cytochrome b5, its upstream reductase CYB5R3 and NADH. Its function is as follows. Probable multifunctional globin with a hexacoordinated heme iron required for the catalysis of various reactions depending on redox condition of the cell as well as oxygen availability. Has a nitric oxide dioxygenase (NOD) activity and is most probably involved in cell-mediated and oxygen-dependent nitric oxide consumption. By scavenging this second messenger may regulate several biological processes including endothelium-mediated vasodilation and vascular tone. Under normoxic conditions functions as a nitric oxide dioxygenase (NOD) but under hypoxic conditions the globin may switch its function to that of a nitrite (NO2) reductase (NiR), generating nitric oxide. Could also have peroxidase and superoxide dismutase activities, detoxifying reactive oxygen species and protecting cells against oxidative stress. Also binds dioxygen with low affinity and could function as an oxygen sensor but has probably no function as a respiratory oxygen carrier. In Mus musculus (Mouse), this protein is Cytoglobin.